A 520-amino-acid polypeptide reads, in one-letter code: Solute carrier family 2, facilitated glucose transporter member 14 (520 aa).

Residues 1–29 (MEFHNGGHVSGIGGFLVSLTSRMKPHTLA) lie on the Cytoplasmic side of the membrane. A helical transmembrane segment spans residues 30–50 (VTPALIFAITVATIGSFQFGY). At 51–88 (NTGVINAPETIIKEFINKTLTDKANAPPSEVLLTNLWS) the chain is on the extracellular side. N-linked (GlcNAc...) asparagine glycosylation is present at Asn67. A helical transmembrane segment spans residues 89-109 (LSVAIFSVGGMIGSFSVGLFV). At 110 to 117 (NRFGRRNS) the chain is on the cytoplasmic side. Residues 118–138 (MLIVNLLAATGGCLMGLCKIA) form a helical membrane-spanning segment. Topologically, residues 139–148 (ESVEMLILGR) are extracellular. A helical transmembrane segment spans residues 149-169 (LVIGLFCGLCTGFVPMYIGEI). Residues 170-177 (SPTALRGA) are Cytoplasmic-facing. A helical transmembrane segment spans residues 178–198 (FGTLNQLGIVIGILVAQIFGL). Gln183 is a D-glucose binding site. The Extracellular segment spans residues 199 to 207 (ELILGSEEL). The helical transmembrane segment at 208 to 228 (WPVLLGFTILPAILQSAALPC) threads the bilayer. The Cytoplasmic segment spans residues 229 to 293 (CPESPRFLLI…LFRVSSYRQP (65 aa)). The chain crosses the membrane as a helical span at residues 294 to 314 (IIISIVLQLSQQLSGINAVFY). D-glucose-binding positions include 304-305 (QQ) and Asn310. The Extracellular portion of the chain corresponds to 315 to 328 (YSTGIFKDAGVQQP). The helical transmembrane segment at 329–349 (IYATISAGVVNTIFTLLSLFL) threads the bilayer. Asn339 contacts D-glucose. Topologically, residues 350–358 (VERAGRRTL) are cytoplasmic. The helical transmembrane segment at 359 to 379 (HMIGLGGMAFCSTLMTVSLLL) threads the bilayer. Topologically, residues 380-392 (KNHYNGMSFVCIG) are extracellular. The helical transmembrane segment at 393–413 (AILVFVACFEIGPGPIPWFIV) threads the bilayer. D-glucose contacts are provided by Glu402 and Trp410. Over 414–423 (AELFSQGPRP) the chain is Cytoplasmic. The helical transmembrane segment at 424-444 (AAMAVAGCSNWTSNFLVGLLF) threads the bilayer. Residues 445-451 (PSAAYYL) are Extracellular-facing. Residues 452-472 (GAYVFIIFTGFLITFLAFTFF) traverse the membrane as a helical segment. At 473–520 (KVPETRGRTFEDITRAFEGQAHGADRSGKDGVMGMNSIEPAKETTTNV) the chain is on the cytoplasmic side. Residues 493-520 (AHGADRSGKDGVMGMNSIEPAKETTTNV) form a disordered region.

The protein belongs to the major facilitator superfamily. Sugar transporter (TC 2.A.1.1) family. Glucose transporter subfamily. Mainly expressed in testis. Also expressed in small intestine, liver and kidney.

Its subcellular location is the cell membrane. It catalyses the reaction D-glucose(out) = D-glucose(in). The enzyme catalyses L-dehydroascorbate(out) = L-dehydroascorbate(in). Functionally, hexose transporter that can mediate the transport of glucose and dehydroascorbate across the cell membrane. The chain is Solute carrier family 2, facilitated glucose transporter member 14 from Homo sapiens (Human).